The chain runs to 447 residues: Blue-light photoreceptor PHR2 (447 aa).

The span at Met1–Thr14 shows a compositional bias: polar residues. The segment at Met1–Gln20 is disordered. Positions Arg115 to Leu249 constitute a Photolyase/cryptochrome alpha/beta domain.

It belongs to the DNA photolyase class-1 family. Requires FAD as cofactor.

In Arabidopsis thaliana (Mouse-ear cress), this protein is Blue-light photoreceptor PHR2 (PHR2).